A 312-amino-acid chain; its full sequence is Taste receptor type 2 member 103 (312 aa).

Residues 1–16 (MVVTMRAALRLMLIST) are Extracellular-facing. A helical membrane pass occupies residues 17-37 (VSLELIIGILANVFIALVNII). Residues 38 to 65 (DWIKRGKISAVDKIYMGLAISRTAFVLS) are Cytoplasmic-facing. Residues 66–86 (VITGFLIAFLDPASLGIGIMI) form a helical membrane-spanning segment. Over 87–92 (RLLTMS) the chain is Extracellular. Residues 93-113 (WTVTNHFSVWFATCLSIFYFL) form a helical membrane-spanning segment. Residues 114 to 133 (KITNFSNTVFLALKWKVKKV) are Cytoplasmic-facing. A helical membrane pass occupies residues 134–154 (VSVTLVVSLIILFINVIVIHI). The Extracellular segment spans residues 155–184 (YTDRFQVNMVQKCGANNTLRAYGLFLSIST). N170 carries an N-linked (GlcNAc...) asparagine glycan. A helical membrane pass occupies residues 185-205 (VFTFIPFTASLTMFLLLIFSL). Residues 206-229 (WRHLKTMHHNATGSRDVSTVAHIK) lie on the Cytoplasmic side of the membrane. The helical transmembrane segment at 230 to 250 (GLQTVVAFLLLYTVFAMSLFS) threads the bilayer. The Extracellular portion of the chain corresponds to 251–264 (QSLSIDAQHTNLLS). The chain crosses the membrane as a helical span at residues 265–285 (HFLRCIGVAFPSGHSCALILG). At 286–312 (NNKLRQASLSVIFWLRCKYKHTENQGP) the chain is on the cytoplasmic side.

It belongs to the G-protein coupled receptor T2R family.

The protein resides in the membrane. In terms of biological role, gustducin-coupled receptor implicated in the perception of bitter compounds in the oral cavity and the gastrointestinal tract. Signals through PLCB2 and the calcium-regulated cation channel TRPM5. In Rattus norvegicus (Rat), this protein is Taste receptor type 2 member 103.